Consider the following 255-residue polypeptide: tRNA uridine(34) hydroxylase (255 aa).

Residues Ala-125–Ser-219 form the Rhodanese domain. Residue Cys-179 is the Cysteine persulfide intermediate of the active site.

It belongs to the TrhO family.

The enzyme catalyses uridine(34) in tRNA + AH2 + O2 = 5-hydroxyuridine(34) in tRNA + A + H2O. Functionally, catalyzes oxygen-dependent 5-hydroxyuridine (ho5U) modification at position 34 in tRNAs. This Nitrobacter hamburgensis (strain DSM 10229 / NCIMB 13809 / X14) protein is tRNA uridine(34) hydroxylase.